The chain runs to 149 residues: Large ribosomal subunit protein uL11 (149 aa).

The protein belongs to the universal ribosomal protein uL11 family. In terms of assembly, part of the ribosomal stalk of the 50S ribosomal subunit. Interacts with L10 and the large rRNA to form the base of the stalk. L10 forms an elongated spine to which L12 dimers bind in a sequential fashion forming a multimeric L10(L12)X complex. Post-translationally, one or more lysine residues are methylated.

In terms of biological role, forms part of the ribosomal stalk which helps the ribosome interact with GTP-bound translation factors. The chain is Large ribosomal subunit protein uL11 from Azorhizobium caulinodans (strain ATCC 43989 / DSM 5975 / JCM 20966 / LMG 6465 / NBRC 14845 / NCIMB 13405 / ORS 571).